The chain runs to 572 residues: Cytochrome P450 monooxygenase xilC (572 aa).

A heme-binding site is contributed by Cys-515.

Belongs to the cytochrome P450 family. The cofactor is heme.

The protein operates within secondary metabolite biosynthesis. Cytochrome P450 monooxygenase; part of the gene cluster that mediates the biosynthesis of the 6-methyl-2-pyrone derivative xylariolide D. XilC hydroxylates the 5-alkyl-6-methyl-2-pyrone backbone called prexylariolide D, produced by the highly reducing polyketide synthase xilA, on its side chain to form xylariolide D. This is Cytochrome P450 monooxygenase xilC from Penicillium rubens (strain ATCC 28089 / DSM 1075 / NRRL 1951 / Wisconsin 54-1255) (Penicillium chrysogenum).